Here is a 427-residue protein sequence, read N- to C-terminus: Enolase (427 aa).

Q163 contributes to the (2R)-2-phosphoglycerate binding site. E205 serves as the catalytic Proton donor. Residues D242, E285, and D312 each coordinate Mg(2+). (2R)-2-phosphoglycerate contacts are provided by K337, R366, S367, and K388. K337 serves as the catalytic Proton acceptor.

It belongs to the enolase family. The cofactor is Mg(2+).

The protein resides in the cytoplasm. It is found in the secreted. Its subcellular location is the cell surface. The enzyme catalyses (2R)-2-phosphoglycerate = phosphoenolpyruvate + H2O. It participates in carbohydrate degradation; glycolysis; pyruvate from D-glyceraldehyde 3-phosphate: step 4/5. Catalyzes the reversible conversion of 2-phosphoglycerate (2-PG) into phosphoenolpyruvate (PEP). It is essential for the degradation of carbohydrates via glycolysis. This is Enolase from Rhodopseudomonas palustris (strain BisA53).